The following is a 189-amino-acid chain: Inner membrane-spanning protein YciB (189 aa).

5 helical membrane-spanning segments follow: residues Leu-3–Tyr-23, Ile-47–Leu-67, Trp-76–Phe-96, Trp-121–Phe-141, and Phe-149–Leu-169.

This sequence belongs to the YciB family.

It is found in the cell inner membrane. In terms of biological role, plays a role in cell envelope biogenesis, maintenance of cell envelope integrity and membrane homeostasis. This chain is Inner membrane-spanning protein YciB, found in Paracidovorax citrulli (strain AAC00-1) (Acidovorax citrulli).